A 447-amino-acid polypeptide reads, in one-letter code: MIPMVKYKDTINLYDEKGKLVEENVPLEAISPLHNPTIQKLVKDVKRTVAVNLAGIENALRTGQVGGKGCMIKGRELDLPIVENAETIAEYVEKVVRVSEDDDTSIKLINDGKQMAVQIPSKRLDVAAEYSVSVLVTAQALKEAIIRTFDVDIFDAPMVHAAVLGGYPHEVTMKGSNIAALLGSPLSLEGPGYALRNIMANHFVACTKKNVMNAVAFAAIMEQTAMFEMGDAVGLFERLHLLGLAYQGLNADNLVIDLVKANGKNGTVGTVVASVVERALEDGVIKEDKTLPSGFKLYKPVDVAKWNAYAAAGLVAAAIVNCGAARAAQNIASTILYYNDILEYETGLPGVDFGRAEGTAVGFSFFSHSIYGGGGPGIFNGNHIVTRHSKGFAIPPVAAAMCLDAGTQMFSPERTSALVGTVFSAIDEFREPLKYVIKGALEVKDKI.

Residue tyrosine 371 coordinates coenzyme M. A coenzyme B-binding site is contributed by glycine 373.

This sequence belongs to the methyl-coenzyme M reductase beta subunit family. As to quaternary structure, MCR is a hexamer of two alpha, two beta, and two gamma chains, forming a dimer of heterotrimers. Coenzyme F430 is required as a cofactor.

It is found in the cytoplasm. It catalyses the reaction coenzyme B + methyl-coenzyme M = methane + coenzyme M-coenzyme B heterodisulfide. It functions in the pathway one-carbon metabolism; methyl-coenzyme M reduction; methane from methyl-coenzyme M: step 1/1. Functionally, component of the methyl-coenzyme M reductase (MCR) I that catalyzes the reductive cleavage of methyl-coenzyme M (CoM-S-CH3 or 2-(methylthio)ethanesulfonate) using coenzyme B (CoB or 7-mercaptoheptanoylthreonine phosphate) as reductant which results in the production of methane and the mixed heterodisulfide of CoB and CoM (CoM-S-S-CoB). This is the final step in methanogenesis. This is Methyl-coenzyme M reductase I subunit beta (mcrB) from Methanocaldococcus jannaschii (strain ATCC 43067 / DSM 2661 / JAL-1 / JCM 10045 / NBRC 100440) (Methanococcus jannaschii).